The following is a 106-amino-acid chain: Large ribosomal subunit protein uL24 (106 aa).

Belongs to the universal ribosomal protein uL24 family. Part of the 50S ribosomal subunit.

Functionally, one of two assembly initiator proteins, it binds directly to the 5'-end of the 23S rRNA, where it nucleates assembly of the 50S subunit. Its function is as follows. One of the proteins that surrounds the polypeptide exit tunnel on the outside of the subunit. The protein is Large ribosomal subunit protein uL24 of Syntrophus aciditrophicus (strain SB).